Here is a 224-residue protein sequence, read N- to C-terminus: Lipoprotein-releasing system ATP-binding protein LolD (224 aa).

Positions 4–224 (LSIRNVFKSY…RLAGGEVSEA (221 aa)) constitute an ABC transporter domain. An ATP-binding site is contributed by 40-47 (GASGAGKS).

Belongs to the ABC transporter superfamily. Lipoprotein translocase (TC 3.A.1.125) family. The complex is composed of two ATP-binding proteins (LolD) and two transmembrane proteins (LolC and LolE).

Its subcellular location is the cell inner membrane. Part of the ABC transporter complex LolCDE involved in the translocation of mature outer membrane-directed lipoproteins, from the inner membrane to the periplasmic chaperone, LolA. Responsible for the formation of the LolA-lipoprotein complex in an ATP-dependent manner. This is Lipoprotein-releasing system ATP-binding protein LolD from Myxococcus xanthus (strain DK1622).